The primary structure comprises 1046 residues: Hemoglobin-haptoglobin-binding protein A (1046 aa).

Positions 1 to 24 (MTNFRLNLLAYSVMLGLTAGVAYA) are cleaved as a signal peptide. 4 tandem repeats follow at residues 26–29 (QPTN), 30–33 (QPTN), 34–37 (QPTN), and 38–41 (QPTN). The segment at 26–41 (QPTNQPTNQPTNQPTN) is 4 X 4 AA tandem repeats of Q-P-T-N. Residues 51–58 (EQINVLGS) carry the TonB box motif. A TBDR plug domain is found at 61 to 188 (HNDNTPPKIA…LGGSVSFDTK (128 aa)). The TBDR beta-barrel domain maps to 196-1046 (NKNYYASYKR…NYRMSVQFEF (851 aa)). The short motif at 1029 to 1046 (NRFYAPGRNYRMSVQFEF) is the TonB C-terminal box element.

It belongs to the TonB-dependent receptor family. Hemoglobin/haptoglobin binding protein subfamily.

The protein resides in the cell outer membrane. In terms of biological role, acts as a receptor for the hemoglobin/haptoglobin complex of the human host and is required for heme uptake. Does not bind hemoglobin alone. The chain is Hemoglobin-haptoglobin-binding protein A (hhuA) from Haemophilus influenzae.